The sequence spans 106 residues: Biogenesis of lysosome-related organelles complex 1 subunit 6 (106 aa).

Positions 78 to 106 (KKTSQLELSDTNIEDGSTTSTPTTTNKSQ) are disordered. Over residues 82–93 (QLELSDTNIEDG) the composition is skewed to polar residues. Residues 94-106 (STTSTPTTTNKSQ) show a composition bias toward low complexity.

Belongs to the BLOC1S6 family. As to quaternary structure, homodimer (isoform 1). Component of the biogenesis of lysosome-related organelles complex-1 (BLOC-1) composed at least of blos-1, blos-2, blos-4, dsbn-1, glo-2, mutd-1 and snpn-1. Isoform 1 interacts with blos-1 and blos-4.

The protein localises to the cytoplasm. Its subcellular location is the endosome. Functionally, component of the biogenesis of lysosome-related organelles complex-1 (BLOC-1) involved in gut granule biogenesis. The polypeptide is Biogenesis of lysosome-related organelles complex 1 subunit 6 (glo-2) (Caenorhabditis elegans).